Here is a 445-residue protein sequence, read N- to C-terminus: Phosphoglucosamine mutase 1 (445 aa).

Ser102 acts as the Phosphoserine intermediate in catalysis. Mg(2+) is bound by residues Ser102, Asp241, Asp243, and Asp245. Ser102 carries the phosphoserine modification.

The protein belongs to the phosphohexose mutase family. The cofactor is Mg(2+). Post-translationally, activated by phosphorylation.

The enzyme catalyses alpha-D-glucosamine 1-phosphate = D-glucosamine 6-phosphate. Catalyzes the conversion of glucosamine-6-phosphate to glucosamine-1-phosphate. The sequence is that of Phosphoglucosamine mutase 1 from Shewanella sp. (strain MR-4).